Here is a 257-residue protein sequence, read N- to C-terminus: Steroid 5-alpha-reductase DET2 (257 aa).

6 helical membrane-spanning segments follow: residues 11–31 (FIVFFILVMAFPTFILCQFFT), 47–67 (ISPPIAWAFMESPTLWLTIIV), 78–97 (LAFLLISPYLFHYTNRTIIY), 110–130 (FPLNIAVTAFIFNLLNAYIQS), 151–171 (IGLVIFGSGMLLNIWADGVLL), and 200–220 (IMEWLGWALMTWSWAGLAFFV).

Belongs to the steroid 5-alpha reductase family. In terms of tissue distribution, mostly expressed in leaves and hypocotyls and, to a lower extent, in stems, cotyledons, roots, seeds and callus.

The protein resides in the membrane. It carries out the reaction a 3-oxo-5alpha-steroid + NADP(+) = a 3-oxo-Delta(4)-steroid + NADPH + H(+). It functions in the pathway plant hormone biosynthesis; brassinosteroid biosynthesis. With respect to regulation, repressed by steroid (4-MA, VG106, PD91, PD17, Finasteride) and non-steroid (AS601811, AFA27, AFA76, AFA131, AFA192) inhibitors; steroid inhibitors are generally more efficient. In terms of biological role, involved in a reduction step in the biosynthesis of the plant steroid, brassinolide (BL). Can use progesterone, testosterone, androstenedione and campestenone as substrate. This chain is Steroid 5-alpha-reductase DET2, found in Solanum lycopersicum (Tomato).